The primary structure comprises 947 residues: Protocadherin alpha-4 (947 aa).

Positions 1-29 are cleaved as a signal peptide; the sequence is MEFSWGSGQESQRLLLSFLLLAIWEAGNS. Cadherin domains lie at 30–133, 134–242, 243–350, 351–455, 456–565, and 573–681; these read QIHY…PPRF, PTTQ…APVF, DRSL…VPEL, EFKS…APVF, AQPE…APTL, and SGGI…APSR. At 30–697 the chain is on the extracellular side; it reads QIHYSIPEEA…HSEASLVDVN (668 aa). Cys-96 and Cys-102 are oxidised to a cystine. N-linked (GlcNAc...) asparagine glycosylation is found at Asn-257 and Asn-265. Thr-438 carries an O-linked (Man) threonine glycan. 2 O-linked (Man) serine glycosylation sites follow: Ser-440 and Ser-442. An N-linked (GlcNAc...) asparagine glycan is attached at Asn-548. A helical membrane pass occupies residues 698-718; that stretch reads VYLIIAICAVSSLLVLTLLLY. Residues 719–947 lie on the Cytoplasmic side of the membrane; that stretch reads TALRCSTVPS…GNSTTDNSDQ (229 aa). PXXP repeat units lie at residues 734–737, 774–777, 796–799, 829–832, 870–873, and 888–891; these read PPKP, PSLS, PRQP, PGGP, PGNP, and PGSP. Positions 734–891 are 6 X 4 AA repeats of P-X-X-P; that stretch reads PPKPVMVCSS…PDKFIIPGSP (158 aa). A required for interaction with FYN region spans residues 738–947; sequence VMVCSSAVGS…GNSTTDNSDQ (210 aa). Disordered regions lie at residues 761-805 and 824-853; these read GEYP…DWRY and ILRA…EVSP. Residues 891–947 are disordered; sequence PAIISIRQEPANNQIDKSDFITFGKKEETKKKKKKKKGNKTQEKKEKGNSTTDNSDQ. Basic and acidic residues predominate over residues 906–920; sequence DKSDFITFGKKEETK.

Forms homodimers in trans (molecules expressed by two different cells). Forms promiscuous heterodimers in cis (at the plasma membrane of the same cell) with other protocadherins. Interacts with FYN. Detected in brain throughout embryonic development. Detected in adult brain, in particular in cerebellum and forebrain.

It is found in the cell membrane. In terms of biological role, calcium-dependent cell-adhesion protein involved in cells self-recognition and non-self discrimination. Thereby, it is involved in the establishment and maintenance of specific neuronal connections in the brain. This Mus musculus (Mouse) protein is Protocadherin alpha-4.